A 598-amino-acid chain; its full sequence is Protein VASCULAR ASSOCIATED DEATH 1, chloroplastic (598 aa).

The span at Met-1–Gly-11 shows a compositional bias: polar residues. Positions Met-1–Glu-64 are disordered. Residues Met-1–Lys-68 constitute a chloroplast transit peptide. N-linked (GlcNAc...) asparagine glycosylation occurs at Asn-61. Residues Glu-70–Arg-134 form the GRAM domain. One can recognise a VASt domain in the interval Asp-272–Lys-444. N-linked (GlcNAc...) asparagine glycosylation is found at Asn-329 and Asn-494. Residues Gln-507–Leu-527 traverse the membrane as a helical segment. Positions Trp-553–Arg-595 form a coiled coil.

Its subcellular location is the membrane. The protein resides in the plastid. It is found in the chloroplast. In terms of biological role, involved in ethylene- and salicylic acid-dependent cell death control associated with cells in the vicinity of vascular bundles. The chain is Protein VASCULAR ASSOCIATED DEATH 1, chloroplastic from Arabidopsis thaliana (Mouse-ear cress).